Consider the following 37-residue polypeptide: Putative preoptic regulatory factor 1 (37 aa).

2 propeptides span residues 1 to 7 (MPYSLQP) and 18 to 37 (FPLCMYMVRGSTWTLVPPDL).

This sequence belongs to the GnRH family. As to expression, preoptic area and testis.

The protein localises to the secreted. Functionally, precursor for a gonadotropin regulatory hormone (GNRH) related decapeptide. The polypeptide is Putative preoptic regulatory factor 1 (Porf1) (Rattus norvegicus (Rat)).